A 121-amino-acid polypeptide reads, in one-letter code: Holo-[acyl-carrier-protein] synthase (121 aa).

Mg(2+) is bound by residues D8 and E58.

This sequence belongs to the P-Pant transferase superfamily. AcpS family. The cofactor is Mg(2+).

It is found in the cytoplasm. The catalysed reaction is apo-[ACP] + CoA = holo-[ACP] + adenosine 3',5'-bisphosphate + H(+). Its function is as follows. Transfers the 4'-phosphopantetheine moiety from coenzyme A to a Ser of acyl-carrier-protein. The sequence is that of Holo-[acyl-carrier-protein] synthase from Bacillus pumilus (strain SAFR-032).